The chain runs to 113 residues: Protein ZEO1 (113 aa).

Residues 1 to 16 (MSEIQNKAETAAQDVQ) are compositionally biased toward polar residues. Residues 1–96 (MSEIQNKAET…AVSEKKETKK (96 aa)) form a disordered region. Serine 2 is subject to N-acetylserine. Residue serine 2 is modified to Phosphoserine. Positions 2–97 (SEIQNKAETA…VSEKKETKKE (96 aa)) form a coiled coil. Basic and acidic residues predominate over residues 17 to 37 (QKLEETKESLQNKGQEVKEQA). Residues lysine 18 and lysine 23 each participate in a glycyl lysine isopeptide (Lys-Gly) (interchain with G-Cter in ubiquitin) cross-link. Serine 25 is modified (phosphoserine). Residues lysine 29 and lysine 34 each participate in a glycyl lysine isopeptide (Lys-Gly) (interchain with G-Cter in ubiquitin) cross-link. Residue serine 40 is modified to Phosphoserine. Lysine 45 is covalently cross-linked (Glycyl lysine isopeptide (Lys-Gly) (interchain with G-Cter in ubiquitin)). Threonine 49 carries the phosphothreonine modification. Residues 53 to 82 (EQVKKEEQNIADGVEQKKTEAANKVEETKK) show a composition bias toward basic and acidic residues. Glycyl lysine isopeptide (Lys-Gly) (interchain with G-Cter in ubiquitin) cross-links involve residues lysine 57 and lysine 82.

In terms of assembly, interacts with MID2. Post-translationally, phosphorylation of Ser-25 is induced 2-fold in response to mating pheromone.

Its subcellular location is the cell membrane. Functionally, acts antagonistically to MID2 in signaling cell wall stress to the PKC1-MPK1 cell integrity pathway. The sequence is that of Protein ZEO1 (ZEO1) from Saccharomyces cerevisiae (strain ATCC 204508 / S288c) (Baker's yeast).